The chain runs to 319 residues: Cobalamin biosynthesis protein CbiB (319 aa).

A run of 5 helical transmembrane segments spans residues 56 to 76 (VMWIVVVGATWGMAWGVLALA), 82 to 102 (WLGWSVEVWMIFTVLAGRSLA), 153 to 173 (VDGIIAPLFFLFLGGAPLAMA), 204 to 224 (VANYLPARLSWLLLGIAAGLC), and 296 to 316 (LMWGASTLALALFIAARCWLS).

It belongs to the CobD/CbiB family.

The protein resides in the cell membrane. It participates in cofactor biosynthesis; adenosylcobalamin biosynthesis. Functionally, converts cobyric acid to cobinamide by the addition of aminopropanol on the F carboxylic group. However, the true cosubstrate could be (R)-1-amino-2-propanol O-2-phosphate, leading to cobinamide phosphate. This Salmonella arizonae (strain ATCC BAA-731 / CDC346-86 / RSK2980) protein is Cobalamin biosynthesis protein CbiB.